The sequence spans 511 residues: Sodium/proline symporter 2 (511 aa).

A run of 13 helical transmembrane segments spans residues 16–36, 54–74, 85–105, 139–159, 175–195, 204–224, 246–266, 286–306, 327–347, 381–401, 410–430, 438–458, and 467–487; these read WQTY…GYYG, IGPY…WMIM, LSAM…YFVV, IISG…GFVS, GLLM…YLAV, VIML…LNGI, VLGI…PHII, ISWM…GIAF, ILFH…AIMS, FLMV…WIAW, LVGN…IFSL, TGAL…IVWI, and LFGM…TYFV.

Belongs to the sodium:solute symporter (SSF) (TC 2.A.21) family.

The protein localises to the cell membrane. It catalyses the reaction L-proline(in) + Na(+)(in) = L-proline(out) + Na(+)(out). Catalyzes the sodium-dependent uptake of extracellular L-proline. The protein is Sodium/proline symporter 2 (putP2) of Staphylococcus saprophyticus subsp. saprophyticus (strain ATCC 15305 / DSM 20229 / NCIMB 8711 / NCTC 7292 / S-41).